A 272-amino-acid polypeptide reads, in one-letter code: uncharacterized protein (272 aa).

This is an uncharacterized protein from Bacillus subtilis (strain 168).